We begin with the raw amino-acid sequence, 429 residues long: Histidinol dehydrogenase (429 aa).

3 residues coordinate NAD(+): Tyr-130, Gln-191, and Asn-214. 3 residues coordinate substrate: Ser-237, Gln-259, and His-262. The Zn(2+) site is built by Gln-259 and His-262. Catalysis depends on proton acceptor residues Glu-327 and His-328. Residues His-328, Asp-361, Glu-415, and His-420 each coordinate substrate. Asp-361 lines the Zn(2+) pocket. Residue His-420 coordinates Zn(2+).

The protein belongs to the histidinol dehydrogenase family. Zn(2+) serves as cofactor.

The enzyme catalyses L-histidinol + 2 NAD(+) + H2O = L-histidine + 2 NADH + 3 H(+). Its pathway is amino-acid biosynthesis; L-histidine biosynthesis; L-histidine from 5-phospho-alpha-D-ribose 1-diphosphate: step 9/9. Catalyzes the sequential NAD-dependent oxidations of L-histidinol to L-histidinaldehyde and then to L-histidine. This Neisseria meningitidis serogroup A / serotype 4A (strain DSM 15465 / Z2491) protein is Histidinol dehydrogenase.